The chain runs to 494 residues: MASASGSPVRVRFCPSPTGNPHVGLVRTALFNWAFARHHQGTLVFRIEDTDAARDSEESYDQLLDSMRWLGFDWDEGPEVGGPHAPYRQSQRMDIYQDVAQKLLDAGHAYRCYCSQEELDTRREAARAAGKPSGYDGHCRELTDAQVEEYTSQGREPIVRFRMPDEAITFTDLVRGEITYLPENVPDYGIVRANGAPLYTLVNPVDDALMEITHVLRGEDLLSSTPRQIALYKALIELGVAKEIPAFGHLPYVMGEGNKKLSKRDPQSSLNLYRERGFLPEGLLNYLSLLGWSLSADQDIFTIEEMVAAFDVSDVQPNPARFDLKKCEAINGDHIRLLEVKDFTERCRPWLKAPVAPWAPEDFDEAKWQAIAPHAQTRLKVLSEITDNVDFLFLPEPVFDEASWTKAMKEGSDALLTTAREKLDAADWTSPEALKEAVLAAGEAHGLKLGKAQAPVRVAVTGRTVGLPLFESLEVLGKEKALARIDAALARLAA.

The short motif at 15-25 is the 'HIGH' region element; the sequence is PSPTGNPHVGL. 4 residues coordinate Zn(2+): Cys-112, Cys-114, Cys-139, and Glu-141. The 'KMSKS' region signature appears at 260–264; that stretch reads KLSKR. Lys-263 contributes to the ATP binding site.

The protein belongs to the class-I aminoacyl-tRNA synthetase family. Glutamate--tRNA ligase type 1 subfamily. In terms of assembly, monomer. Zn(2+) serves as cofactor.

The protein resides in the cytoplasm. It catalyses the reaction tRNA(Glu) + L-glutamate + ATP = L-glutamyl-tRNA(Glu) + AMP + diphosphate. In terms of biological role, catalyzes the attachment of glutamate to tRNA(Glu) in a two-step reaction: glutamate is first activated by ATP to form Glu-AMP and then transferred to the acceptor end of tRNA(Glu). The protein is Glutamate--tRNA ligase of Streptomyces coelicolor (strain ATCC BAA-471 / A3(2) / M145).